Here is a 122-residue protein sequence, read N- to C-terminus: NADH-quinone oxidoreductase subunit A (122 aa).

3 helical membrane passes run 10–30 (MIVLIFLLLGILLPVVALTLG), 66–86 (IFALLFVIFDVETLFLYPWAV), and 91–111 (LGLFALIEMLIFVVMLLVGLA).

The protein belongs to the complex I subunit 3 family. As to quaternary structure, NDH-1 is composed of 14 different subunits. Subunits NuoA, H, J, K, L, M, N constitute the membrane sector of the complex.

The protein resides in the cell membrane. It carries out the reaction a quinone + NADH + 5 H(+)(in) = a quinol + NAD(+) + 4 H(+)(out). In terms of biological role, NDH-1 shuttles electrons from NADH, via FMN and iron-sulfur (Fe-S) centers, to quinones in the respiratory chain. The immediate electron acceptor for the enzyme in this species is believed to be a menaquinone. Couples the redox reaction to proton translocation (for every two electrons transferred, four hydrogen ions are translocated across the cytoplasmic membrane), and thus conserves the redox energy in a proton gradient. This Bacillus thuringiensis subsp. konkukian (strain 97-27) protein is NADH-quinone oxidoreductase subunit A.